The chain runs to 234 residues: Endonuclease NucS (234 aa).

It belongs to the NucS endonuclease family.

Its subcellular location is the cytoplasm. Cleaves both 3' and 5' ssDNA extremities of branched DNA structures. This chain is Endonuclease NucS, found in Bifidobacterium animalis subsp. lactis (strain AD011).